Reading from the N-terminus, the 111-residue chain is uncharacterized protein (111 aa).

The helical transmembrane segment at 60–80 (TFGRFLAHISCLICILSKRIF) threads the bilayer.

The protein localises to the mitochondrion membrane. This is an uncharacterized protein from Arabidopsis thaliana (Mouse-ear cress).